A 129-amino-acid polypeptide reads, in one-letter code: MLGLKQVHHIAIIATDYAVSKAFYCDILGFTLQSEVYREARDSWKGDLALNGQYVIELFSFPFPPERPSRPEACGLRHLAFSVDDIDAAVAHLESHNVKCETIRVDPYTQKRFTFFNDPDGLPLELYEQ.

A VOC domain is found at 6 to 129 (QVHHIAIIAT…DGLPLELYEQ (124 aa)). The a divalent metal cation site is built by His-9, Glu-57, His-78, and Glu-125.

This sequence to B.subtilis YwkD.

This is an uncharacterized protein from Escherichia coli (strain K12).